Consider the following 450-residue polypeptide: tRNA modification GTPase MnmE (450 aa).

Positions 23, 79, and 118 each coordinate (6S)-5-formyl-5,6,7,8-tetrahydrofolate. The region spanning 214 to 374 is the TrmE-type G domain; that stretch reads GITLILVGKP…LKEHILNKVG (161 aa). Residue Asn224 participates in K(+) binding. GTP is bound by residues 224–229, 243–249, and 268–271; these read NAGKSS, TSIAGTT, and DTAG. Mg(2+) is bound at residue Ser228. Thr243, Ile245, and Thr248 together coordinate K(+). Residue Thr249 coordinates Mg(2+). Lys450 contributes to the (6S)-5-formyl-5,6,7,8-tetrahydrofolate binding site.

The protein belongs to the TRAFAC class TrmE-Era-EngA-EngB-Septin-like GTPase superfamily. TrmE GTPase family. Homodimer. Heterotetramer of two MnmE and two MnmG subunits. It depends on K(+) as a cofactor.

The protein localises to the cytoplasm. Functionally, exhibits a very high intrinsic GTPase hydrolysis rate. Involved in the addition of a carboxymethylaminomethyl (cmnm) group at the wobble position (U34) of certain tRNAs, forming tRNA-cmnm(5)s(2)U34. In Francisella tularensis subsp. holarctica (strain OSU18), this protein is tRNA modification GTPase MnmE.